The following is a 243-amino-acid chain: Ubiquinone/menaquinone biosynthesis C-methyltransferase UbiE (243 aa).

S-adenosyl-L-methionine-binding positions include T69, D90, and 116 to 117 (DA).

It belongs to the class I-like SAM-binding methyltransferase superfamily. MenG/UbiE family.

It catalyses the reaction a 2-demethylmenaquinol + S-adenosyl-L-methionine = a menaquinol + S-adenosyl-L-homocysteine + H(+). The enzyme catalyses a 2-methoxy-6-(all-trans-polyprenyl)benzene-1,4-diol + S-adenosyl-L-methionine = a 5-methoxy-2-methyl-3-(all-trans-polyprenyl)benzene-1,4-diol + S-adenosyl-L-homocysteine + H(+). The protein operates within quinol/quinone metabolism; menaquinone biosynthesis; menaquinol from 1,4-dihydroxy-2-naphthoate: step 2/2. Its pathway is cofactor biosynthesis; ubiquinone biosynthesis. Methyltransferase required for the conversion of demethylmenaquinol (DMKH2) to menaquinol (MKH2) and the conversion of 2-polyprenyl-6-methoxy-1,4-benzoquinol (DDMQH2) to 2-polyprenyl-3-methyl-6-methoxy-1,4-benzoquinol (DMQH2). The polypeptide is Ubiquinone/menaquinone biosynthesis C-methyltransferase UbiE (Ralstonia nicotianae (strain ATCC BAA-1114 / GMI1000) (Ralstonia solanacearum)).